A 378-amino-acid polypeptide reads, in one-letter code: N-acetyldiaminopimelate deacetylase (378 aa).

Residue Asp-72 is part of the active site. Glu-131 (proton acceptor) is an active-site residue.

The protein belongs to the peptidase M20A family. N-acetyldiaminopimelate deacetylase subfamily.

The catalysed reaction is N-acetyl-(2S,6S)-2,6-diaminopimelate + H2O = (2S,6S)-2,6-diaminopimelate + acetate. It functions in the pathway amino-acid biosynthesis; L-lysine biosynthesis via DAP pathway; LL-2,6-diaminopimelate from (S)-tetrahydrodipicolinate (acetylase route): step 3/3. In terms of biological role, catalyzes the conversion of N-acetyl-diaminopimelate to diaminopimelate and acetate. This chain is N-acetyldiaminopimelate deacetylase, found in Enterococcus faecalis (strain ATCC 700802 / V583).